Here is a 345-residue protein sequence, read N- to C-terminus: MVDEKRQKAIELALKQIDKAFGKGALVRLGDKQVEKIDSISTGSLGLDMALGIGGVPKGRIIEIYGPESSGKTTLSLQIVAECQRNGGICAFIDAEHALDVYYAKRLGVDTENLLVSQPDTGEQALEILETLTRSGAVDLIVIDSVAALTPKAEIEGDMGDQHVGLQARLMSHALRKITGVLHKMNATLIFINQIRMKIGTMGYGSPETTTGGNALKFYASVRIDVRRVATLKQNDQQIGNRTKAKVVKNKVAPPFREAEFDIMFGEGISKEGEIIDYGIKLDIIDKSGAWLSYNDKKLGQGRENAKIVLKENKSLADEITAKIKEQIGSKDEILPLPDEPETDE.

Residue 66–73 (GPESSGKT) coordinates ATP.

The protein belongs to the RecA family.

The protein localises to the cytoplasm. Functionally, can catalyze the hydrolysis of ATP in the presence of single-stranded DNA, the ATP-dependent uptake of single-stranded DNA by duplex DNA, and the ATP-dependent hybridization of homologous single-stranded DNAs. It interacts with LexA causing its activation and leading to its autocatalytic cleavage. The polypeptide is Protein RecA (Helicobacter hepaticus (strain ATCC 51449 / 3B1)).